A 156-amino-acid polypeptide reads, in one-letter code: Endoribonuclease YbeY (156 aa).

The Zn(2+) site is built by histidine 122, histidine 126, and histidine 132.

This sequence belongs to the endoribonuclease YbeY family. Requires Zn(2+) as cofactor.

Its subcellular location is the cytoplasm. Its function is as follows. Single strand-specific metallo-endoribonuclease involved in late-stage 70S ribosome quality control and in maturation of the 3' terminus of the 16S rRNA. The chain is Endoribonuclease YbeY from Syntrophomonas wolfei subsp. wolfei (strain DSM 2245B / Goettingen).